We begin with the raw amino-acid sequence, 330 residues long: CRISPR-associated endonuclease Cas1 (330 aa).

The Mn(2+) site is built by glutamate 154, histidine 222, and glutamate 237.

The protein belongs to the CRISPR-associated endonuclease Cas1 family. As to quaternary structure, homodimer, forms a heterotetramer with a Cas2 homodimer. The cofactor is Mg(2+). Requires Mn(2+) as cofactor.

In terms of biological role, CRISPR (clustered regularly interspaced short palindromic repeat), is an adaptive immune system that provides protection against mobile genetic elements (viruses, transposable elements and conjugative plasmids). CRISPR clusters contain spacers, sequences complementary to antecedent mobile elements, and target invading nucleic acids. CRISPR clusters are transcribed and processed into CRISPR RNA (crRNA). Acts as a dsDNA endonuclease. Involved in the integration of spacer DNA into the CRISPR cassette. This is CRISPR-associated endonuclease Cas1 from Clostridium perfringens (strain SM101 / Type A).